Reading from the N-terminus, the 575-residue chain is MQSPWKILTVAPLFLLLSLQSSASPANDDQSRPSLSNGHTCVGCVLVVSVIEQLAQVHNSTVQASMERLCSYLPEKLFLKTTCYLVIDKFGSDIIKLLSADMNADVVCHTLEFCKQNTGQPLCHLYPLPKETWKFTLQKARQIVKKSPILKYSRSGSDICSLPVLAKICQKIKLAMEQSVPFKDVDSDKYSVFPTLRGYHWRGRDCNDSDESVYPGRRPNNWDVHQDSNCNGIWGVDPKDGVPYEKKFCEGSQPRGIILLGDSAGAHFHISPEWITASQMSLNSFINLPTALTNELDWPQLSGATGFLDSTVGIKEKSIYLRLWKRNHCNHRDYQNISRNGASSRNLKKFIESLSRNKVLDYPAIVIYAMIGNDVCSGKSDPVPAMTTPEKLYSNVMQTLKHLNSHLPNGSHVILYGLPDGTFLWDNLHNRYHPLGQLNKDMTYAQLYSFLNCLQVSPCHGWMSSNKTLRTLTSERAEQLSNTLKKIAASEKFTNFNLFYMDFAFHEIIQEWQKRGGQPWQLIEPVDGFHPNEVALLLLADHFWKKVQLQWPQILGKENPFNPQIKQVFGDQGGH.

The signal sequence occupies residues 1–23 (MQSPWKILTVAPLFLLLSLQSSA). The propeptide occupies 24-34 (SPANDDQSRPS). Residues 37–118 (NGHTCVGCVL…HTLEFCKQNT (82 aa)) form the Saposin B-type domain. The tract at residues 38-70 (GHTCVGCVLVVSVIEQLAQVHNSTVQASMERLC) is important for enzyme activity, localization to cytoplasmic vesicles, and protein stability. 8 cysteine pairs are disulfide-bonded: cysteine 41/cysteine 114, cysteine 44/cysteine 108, cysteine 70/cysteine 83, cysteine 123/cysteine 453, cysteine 160/cysteine 169, cysteine 206/cysteine 230, cysteine 249/cysteine 329, and cysteine 376/cysteine 459. Asparagine 59 carries an N-linked (GlcNAc...) asparagine glycan. Residues 173-177 (KLAME) form a lipopolysaccharide binding region. Ca(2+) is bound by residues aspartate 184, aspartate 186, aspartate 188, tyrosine 190, aspartate 205, asparagine 207, aspartate 208, aspartate 210, valine 213, aspartate 223, aspartate 227, asparagine 229, asparagine 231, isoleucine 233, and glutamate 245. A glycan (N-linked (GlcNAc...) asparagine) is linked at asparagine 207. Residue serine 263 is part of the active site. N-linked (GlcNAc...) asparagine glycans are attached at residues asparagine 409 and asparagine 466.

Heterodimer of the large and small subunits; disulfide-linked. The cofactor is Ca(2+). Cleaved into a large and a small subunit. Post-translationally, the small subunit is N-glycosylated.

The protein localises to the secreted. It is found in the cytoplasmic vesicle. It catalyses the reaction a 3-(acyloxy)acyl derivative of bacterial toxin + H2O = a 3-hydroxyacyl derivative of bacterial toxin + a fatty acid + H(+). With respect to regulation, inhibited by EDTA. In terms of biological role, removes the secondary (acyloxyacyl-linked) fatty acyl chains from the lipid A region of bacterial lipopolysaccharides. By breaking down LPS, terminates the host response to bacterial infection and prevents prolonged and damaging inflammatory responses. In peritoneal macrophages, seems to be important for recovery from a state of immune tolerance following infection by Gram-negative bacteria. This chain is Acyloxyacyl hydrolase, found in Homo sapiens (Human).